The sequence spans 310 residues: MKVLWAALVVTLLAGCGADVEPGPEVQLGKEWATWQASQPWEQALGRFWNYLRWVQTLSEQVQEQLLSSQVTEELTALMDDTMKEVKACQSELEEQLGPVTEETKARVSKELQAAQARLGADMEEVRSRLAQYRGELQAMVGQSTEELRGRLSAHLRKMRKRLLRDAEDLQRRLAVYQAGIWEGAERSVNTLREHLGPLAEQAATVHTLVSKPLQERAEAWAQRLRGRLEKAGFPVGDRLDEVREQVQEVRAKVEEQANQVRLQAEAFQGRLKSWFEPLVQDMQQKWAELVEKVQLAVGAVPTSVPSEKQ.

Positions 1–18 are cleaved as a signal peptide; that stretch reads MKVLWAALVVTLLAGCGA. 8 tandem repeats follow at residues 77 to 98, 99 to 120, 121 to 142, 143 to 164, 165 to 186, 187 to 208, 209 to 226, and 227 to 248. The interval 77 to 248 is 8 X 22 AA approximate tandem repeats; it reads ALMDDTMKEV…RLDEVREQVQ (172 aa). Residues 155–165 are LDL and other lipoprotein receptors binding; it reads HLRKMRKRLLR. 159–162 is a binding site for heparin; sequence MRKR. Residues 207 to 283 are lipid-binding and lipoprotein association; it reads HTLVSKPLQE…SWFEPLVQDM (77 aa). Residue 222-229 participates in heparin binding; it reads AQRLRGRL. Positions 259–310 are homooligomerization; the sequence is NQVRLQAEAFQGRLKSWFEPLVQDMQQKWAELVEKVQLAVGAVPTSVPSEKQ. The tract at residues 271 to 283 is specificity for association with VLDL; that stretch reads RLKSWFEPLVQDM.

It belongs to the apolipoprotein A1/A4/E family. Homotetramer. May interact with ABCA1; functionally associated with ABCA1 in the biogenesis of HDLs. May interact with APP/A4 amyloid-beta peptide; the interaction is extremely stable in vitro but its physiological significance is unclear. May interact with MAPT. May interact with MAP2. In the cerebrospinal fluid, interacts with secreted SORL1. Interacts with PMEL; this allows the loading of PMEL luminal fragment on ILVs to induce fibril nucleation. Post-translationally, APOE exists as multiple glycosylated and sialylated glycoforms within cells and in plasma. The extent of glycosylation and sialylation are tissue and context specific. In terms of processing, glycated in plasma VLDL. Phosphorylated by FAM20C in the extracellular medium.

The protein resides in the secreted. It is found in the extracellular space. It localises to the extracellular matrix. Its subcellular location is the extracellular vesicle. The protein localises to the endosome. The protein resides in the multivesicular body. APOE is an apolipoprotein, a protein associating with lipid particles, that mainly functions in lipoprotein-mediated lipid transport between organs via the plasma and interstitial fluids. APOE is a core component of plasma lipoproteins and is involved in their production, conversion and clearance. Apolipoproteins are amphipathic molecules that interact both with lipids of the lipoprotein particle core and the aqueous environment of the plasma. As such, APOE associates with chylomicrons, chylomicron remnants, very low density lipoproteins (VLDL) and intermediate density lipoproteins (IDL) but shows a preferential binding to high-density lipoproteins (HDL). It also binds a wide range of cellular receptors including the LDL receptor/LDLR and the very low-density lipoprotein receptor/VLDLR that mediate the cellular uptake of the APOE-containing lipoprotein particles. Finally, APOE also has a heparin-binding activity and binds heparan-sulfate proteoglycans on the surface of cells, a property that supports the capture and the receptor-mediated uptake of APOE-containing lipoproteins by cells. The polypeptide is Apolipoprotein E (APOE) (Ceratotherium simum cottoni (Northern white rhinoceros)).